Consider the following 209-residue polypeptide: D-aminoacyl-tRNA deacylase 1 (209 aa).

Residues Val4, Gln6, and Cys28 each contribute to the Mg(2+) site. A Gly-cisPro motif, important for rejection of L-amino acids motif is present at residues 139-140 (GP). Residues 142-209 (TIELESPAPG…EGDVSSEREP (68 aa)) are disordered. Basic and acidic residues-rich tracts occupy residues 159–170 (QLSKLEKQQQRK) and 181–194 (SSKE…EDRS). Residues Ser197, Ser204, and Ser205 each carry the phosphoserine modification.

Belongs to the DTD family. As to quaternary structure, homodimer. Interacts with CDC45 and TOPBP1. Post-translationally, preferentially phosphorylated in cells arrested early in S phase. Phosphorylation in the C-terminus weakens the interaction with CDC45.

It is found in the nucleus. The protein resides in the cytoplasm. The enzyme catalyses glycyl-tRNA(Ala) + H2O = tRNA(Ala) + glycine + H(+). The catalysed reaction is a D-aminoacyl-tRNA + H2O = a tRNA + a D-alpha-amino acid + H(+). Functionally, an aminoacyl-tRNA editing enzyme that deacylates mischarged D-aminoacyl-tRNAs. Also deacylates mischarged glycyl-tRNA(Ala), protecting cells against glycine mischarging by AlaRS. Acts via tRNA-based rather than protein-based catalysis; rejects L-amino acids rather than detecting D-amino acids in the active site. By recycling D-aminoacyl-tRNA to D-amino acids and free tRNA molecules, this enzyme counteracts the toxicity associated with the formation of D-aminoacyl-tRNA entities in vivo and helps enforce protein L-homochirality. ATPase involved in DNA replication, may facilitate loading of CDC45 onto pre-replication complexes. The sequence is that of D-aminoacyl-tRNA deacylase 1 (DTD1) from Bos taurus (Bovine).